Consider the following 692-residue polypeptide: Catalase-B (692 aa).

Catalysis depends on residues histidine 69 and asparagine 142. Tyrosine 356 lines the heme pocket.

The protein belongs to the catalase family. It depends on heme as a cofactor.

The protein resides in the cytoplasm. It catalyses the reaction 2 H2O2 = O2 + 2 H2O. Its function is as follows. Occurs in almost all aerobically respiring organisms and serves to protect cells from the toxic effects of hydrogen peroxide. Its accumulation in prespore cells affords the spores protection from oxidation during prolonged dormancy. Required for normal developmental timing, possibly through a regulatory role in differentiation and morphogenesis. The chain is Catalase-B (catB) from Dictyostelium discoideum (Social amoeba).